The following is a 312-amino-acid chain: Erlin (312 aa).

Residues 1 to 3 (MLT) lie on the Cytoplasmic side of the membrane. The helical transmembrane segment at 4-24 (ELALGLFALWIAIFSQALHKI) threads the bilayer. The Lumenal segment spans residues 25–312 (EEGHVGVYYR…FVMGTTQQTV (288 aa)). An N-linked (GlcNAc...) asparagine glycan is attached at asparagine 104.

It belongs to the band 7/mec-2 family. As to quaternary structure, seems to form a multimeric complex. As to expression, expressed in the germline only.

The protein localises to the endoplasmic reticulum membrane. In Caenorhabditis elegans, this protein is Erlin.